The chain runs to 842 residues: Valine--tRNA ligase (842 aa).

A 'HIGH' region motif is present at residues 86-96 (PFTSGELHMGH). The 'KMSKS' region motif lies at 572–576 (RMSKS). K575 contributes to the ATP binding site.

The protein belongs to the class-I aminoacyl-tRNA synthetase family. ValS type 2 subfamily.

The protein localises to the cytoplasm. The enzyme catalyses tRNA(Val) + L-valine + ATP = L-valyl-tRNA(Val) + AMP + diphosphate. In terms of biological role, catalyzes the attachment of valine to tRNA(Val). As ValRS can inadvertently accommodate and process structurally similar amino acids such as threonine, to avoid such errors, it has a 'posttransfer' editing activity that hydrolyzes mischarged Thr-tRNA(Val) in a tRNA-dependent manner. This chain is Valine--tRNA ligase, found in Saccharolobus solfataricus (strain ATCC 35092 / DSM 1617 / JCM 11322 / P2) (Sulfolobus solfataricus).